Here is a 95-residue protein sequence, read N- to C-terminus: Aspartyl/glutamyl-tRNA(Asn/Gln) amidotransferase subunit C (95 aa).

Belongs to the GatC family. Heterotrimer of A, B and C subunits.

It catalyses the reaction L-glutamyl-tRNA(Gln) + L-glutamine + ATP + H2O = L-glutaminyl-tRNA(Gln) + L-glutamate + ADP + phosphate + H(+). It carries out the reaction L-aspartyl-tRNA(Asn) + L-glutamine + ATP + H2O = L-asparaginyl-tRNA(Asn) + L-glutamate + ADP + phosphate + 2 H(+). Its function is as follows. Allows the formation of correctly charged Asn-tRNA(Asn) or Gln-tRNA(Gln) through the transamidation of misacylated Asp-tRNA(Asn) or Glu-tRNA(Gln) in organisms which lack either or both of asparaginyl-tRNA or glutaminyl-tRNA synthetases. The reaction takes place in the presence of glutamine and ATP through an activated phospho-Asp-tRNA(Asn) or phospho-Glu-tRNA(Gln). The chain is Aspartyl/glutamyl-tRNA(Asn/Gln) amidotransferase subunit C from Shouchella clausii (strain KSM-K16) (Alkalihalobacillus clausii).